The chain runs to 261 residues: 14-3-3-like protein GF14-12 (261 aa).

It belongs to the 14-3-3 family.

Functionally, is associated with a DNA binding complex to bind to the G box, a well-characterized cis-acting DNA regulatory element found in plant genes. This Zea mays (Maize) protein is 14-3-3-like protein GF14-12 (GRF2).